The primary structure comprises 1092 residues: Probable cellulose synthase A catalytic subunit 6 [UDP-forming] (1092 aa).

Residues 1–280 lie on the Cytoplasmic side of the membrane; that stretch reads MEASAGLVAG…SSSRINPYRM (280 aa). Residues cysteine 42, cysteine 45, cysteine 61, cysteine 64, cysteine 69, cysteine 72, cysteine 84, and cysteine 87 each contribute to the Zn(2+) site. The RING-type; degenerate zinc finger occupies 42–88; that stretch reads CQICGDDVGEGPDGEPFVACNECAFPVCRNCYDYERREGSQACPQCK. The disordered stretch occupies residues 100-123; that stretch reads VAGDEEEDGVDDLEGEFGLDGRED. Acidic residues predominate over residues 103 to 116; the sequence is DEEEDGVDDLEGEF. Residues 281-301 form a helical membrane-spanning segment; sequence IIIIRLVVLGFFFHYRVMHPV. The Extracellular segment spans residues 302–303; it reads ND. A helical transmembrane segment spans residues 304-324; the sequence is AFALWLISVICEIWFAMSWIL. Residues 325 to 868 lie on the Cytoplasmic side of the membrane; sequence DQFPKWLPIE…FLERFSYINS (544 aa). The UDP-alpha-D-glucose site is built by serine 363, lysine 369, glutamate 370, and aspartate 399. The active site involves aspartate 399. Residues 453–480 are a coiled coil; it reads VRERRAMKRDYEEFKVRINALVAKAQKV. Residue lysine 540 participates in UDP-alpha-D-glucose binding. Mn(2+)-binding residues include lysine 541 and aspartate 565. Residue aspartate 792 is part of the active site. A helical membrane pass occupies residues 869–889; sequence IVYPWTSIPLLAYCTLPAICL. The Extracellular portion of the chain corresponds to 890–901; sequence LTGKFITPELTN. A helical transmembrane segment spans residues 902 to 922; sequence VASLWFMSLFICIFVTGILEM. At 923-937 the chain is on the cytoplasmic side; it reads RWSGVAIDDWWRNEQ. The helical transmembrane segment at 938 to 958 threads the bilayer; sequence FWVIGGVSSHLFAVFQGLLKV. The Extracellular portion of the chain corresponds to 959–987; it reads LAGVDTSFTVTSKAGDDEEFSELYTFKWT. The helical transmembrane segment at 988-1008 threads the bilayer; sequence TLLIPPTTLLLLNFIGVVAGV. Residues 1009–1019 are Cytoplasmic-facing; it reads SNAINNGYESW. Residues 1020–1040 traverse the membrane as a helical segment; it reads GPLFGKLFFAFWVIVHLYPFL. Topologically, residues 1041–1049 are extracellular; sequence KGLVGRQNR. The chain crosses the membrane as a helical span at residues 1050-1070; that stretch reads TPTIVIVWSILLASIFSLLWV. Topologically, residues 1071–1092 are cytoplasmic; sequence RIDPFLAKNNGPLLEECGLDCN.

Belongs to the glycosyltransferase 2 family. Plant cellulose synthase subfamily. It depends on Mn(2+) as a cofactor. Zn(2+) serves as cofactor.

The protein resides in the cell membrane. The catalysed reaction is [(1-&gt;4)-beta-D-glucosyl](n) + UDP-alpha-D-glucose = [(1-&gt;4)-beta-D-glucosyl](n+1) + UDP + H(+). It participates in glycan metabolism; plant cellulose biosynthesis. Probable catalytic subunit of cellulose synthase terminal complexes ('rosettes'), required for beta-1,4-glucan microfibril crystallization, a major mechanism of the cell wall formation. In Oryza sativa subsp. japonica (Rice), this protein is Probable cellulose synthase A catalytic subunit 6 [UDP-forming] (CESA6).